The primary structure comprises 332 residues: tRNA dimethylallyltransferase (332 aa).

30 to 37 (GPTAVGKT) is an ATP binding site. 32-37 (TAVGKT) is a binding site for substrate. Residues 57–60 (DSMQ) form an interaction with substrate tRNA region.

This sequence belongs to the IPP transferase family. Monomer. Requires Mg(2+) as cofactor.

It carries out the reaction adenosine(37) in tRNA + dimethylallyl diphosphate = N(6)-dimethylallyladenosine(37) in tRNA + diphosphate. Functionally, catalyzes the transfer of a dimethylallyl group onto the adenine at position 37 in tRNAs that read codons beginning with uridine, leading to the formation of N6-(dimethylallyl)adenosine (i(6)A). In Natranaerobius thermophilus (strain ATCC BAA-1301 / DSM 18059 / JW/NM-WN-LF), this protein is tRNA dimethylallyltransferase.